The sequence spans 255 residues: Probable transcriptional regulator ycf27 (255 aa).

The 114-residue stretch at 9–122 (KILIADDESS…ELEARIRCVL (114 aa)) folds into the Response regulatory domain. Asp58 carries the 4-aspartylphosphate modification. The H-T-H motif DNA-binding region spans 78–96 (DIPIIMLTALGDVTDRITG). A DNA-binding region (ompR/PhoB-type) is located at residues 137–238 (SGIINIGFLK…SRGTGYLFQR (102 aa)).

It localises to the plastid. It is found in the chloroplast. Probable promoter-specific protein mediating the interaction between DNA and RNA polymerase. The protein is Probable transcriptional regulator ycf27 (ycf27) of Galdieria sulphuraria (Red alga).